Reading from the N-terminus, the 287-residue chain is Co-chaperone protein DjlA (287 aa).

Residues 1 to 6 (MQIFGK) lie on the Periplasmic side of the membrane. Residues 7–30 (ILGAFFGFLFGGVFGALFGLFIGH) form a helical membrane-spanning segment. At 31 to 287 (QFDKARRLSQ…DLIKKEKGFK (257 aa)) the chain is on the cytoplasmic side. Residues 192–213 (GGFGGQQHQSHHSSSHGGWQQA) are disordered. A J domain is found at 221 to 287 (DAYKILGIDA…DLIKKEKGFK (67 aa)).

In terms of assembly, homodimer.

The protein resides in the cell inner membrane. Regulatory DnaK co-chaperone. Direct interaction between DnaK and DjlA is needed for the induction of the wcaABCDE operon, involved in the synthesis of a colanic acid polysaccharide capsule, possibly through activation of the RcsB/RcsC phosphotransfer signaling pathway. The colanic acid capsule may help the bacterium survive conditions outside the host. This is Co-chaperone protein DjlA from Vibrio vulnificus (strain YJ016).